We begin with the raw amino-acid sequence, 274 residues long: Cytochrome b-c1 complex subunit Rieske, mitochondrial (274 aa).

Residues 79 to 110 (SHTDVKVPDFSDYRRAEVLDSTKSSKESSEAR) are Mitochondrial matrix-facing. A helical transmembrane segment spans residues 111–137 (KGFSYLVTATTTVGVAYAAKNVVSQFV). Residues 138-274 (SSMSASADVL…FTSDDVVVVG (137 aa)) are Mitochondrial intermembrane-facing. The region spanning 187-272 (EAAVEVSQLR…YEFTSDDVVV (86 aa)) is the Rieske domain. Positions 217, 219, 236, 239, and 241 each coordinate [2Fe-2S] cluster. A disulfide bridge connects residues C222 and C238.

This sequence belongs to the Rieske iron-sulfur protein family. Component of the ubiquinol-cytochrome c oxidoreductase (cytochrome b-c1 complex, complex III, CIII), a multisubunit enzyme composed of 11 subunits. The complex is composed of 3 respiratory subunits cytochrome b, cytochrome c1 and Rieske protein UQCRFS1, 2 core protein subunits UQCRC1/QCR1 and UQCRC2/QCR2, and 6 low-molecular weight protein subunits UQCRH/QCR6, UQCRB/QCR7, UQCRQ/QCR8, UQCR10/QCR9, UQCR11/QCR10 and subunit 9, the cleavage product of Rieske protein UQCRFS1. The complex exists as an obligatory dimer and forms supercomplexes (SCs) in the inner mitochondrial membrane with NADH-ubiquinone oxidoreductase (complex I, CI) and cytochrome c oxidase (complex IV, CIV), resulting in different assemblies (supercomplex SCI(1)III(2)IV(1) and megacomplex MCI(2)III(2)IV(2)). Incorporation of the Rieske protein UQCRFS1 is the penultimate step in complex III assembly. Interacts with TTC19, which is involved in the clearance of UQCRFS1 fragments. As to quaternary structure, component of the ubiquinol-cytochrome c oxidoreductase (cytochrome b-c1 complex, complex III, CIII). Subunit 9 corresponds to the mitochondrial targeting sequence (MTS) of Rieske protein UQCRFS1. It is retained after processing and incorporated inside complex III, where it remains bound to the complex and localizes between the 2 core subunits UQCRC1/QCR1 and UQCRC2/QCR2. [2Fe-2S] cluster serves as cofactor. Proteolytic processing is necessary for the correct insertion of UQCRFS1 in the complex III dimer. Several fragments are generated during UQCRFS1 insertion, most probably due to the endogenous matrix-processing peptidase (MPP) activity of the 2 core protein subunits UQCRC1/QCR1 and UQCRC2/QCR2, which are homologous to the 2 mitochondrial-processing peptidase (MPP) subunits beta-MPP and alpha-MPP respectively. The action of the protease is also necessary for the clearance of the UQCRFS1 fragments.

It is found in the mitochondrion inner membrane. It catalyses the reaction a quinol + 2 Fe(III)-[cytochrome c](out) = a quinone + 2 Fe(II)-[cytochrome c](out) + 2 H(+)(out). In terms of biological role, component of the ubiquinol-cytochrome c oxidoreductase, a multisubunit transmembrane complex that is part of the mitochondrial electron transport chain which drives oxidative phosphorylation. The respiratory chain contains 3 multisubunit complexes succinate dehydrogenase (complex II, CII), ubiquinol-cytochrome c oxidoreductase (cytochrome b-c1 complex, complex III, CIII) and cytochrome c oxidase (complex IV, CIV), that cooperate to transfer electrons derived from NADH and succinate to molecular oxygen, creating an electrochemical gradient over the inner membrane that drives transmembrane transport and the ATP synthase. The cytochrome b-c1 complex catalyzes electron transfer from ubiquinol to cytochrome c, linking this redox reaction to translocation of protons across the mitochondrial inner membrane, with protons being carried across the membrane as hydrogens on the quinol. In the process called Q cycle, 2 protons are consumed from the matrix, 4 protons are released into the intermembrane space and 2 electrons are passed to cytochrome c. The Rieske protein is a catalytic core subunit containing a [2Fe-2S] iron-sulfur cluster. It cycles between 2 conformational states during catalysis to transfer electrons from the quinol bound in the Q(0) site in cytochrome b to cytochrome c1. Incorporation of UQCRFS1 is the penultimate step in complex III assembly. Its function is as follows. Component of the ubiquinol-cytochrome c oxidoreductase (cytochrome b-c1 complex, complex III, CIII). UQCRFS1 undergoes proteolytic processing once it is incorporated in the complex III dimer. One of the fragments, called subunit 9, corresponds to its mitochondrial targeting sequence (MTS). The proteolytic processing is necessary for the correct insertion of UQCRFS1 in the complex III dimer, but the persistence of UQCRFS1-derived fragments may prevent newly imported UQCRFS1 to be processed and assembled into complex III and is detrimental for the complex III structure and function. In Mus musculus (Mouse), this protein is Cytochrome b-c1 complex subunit Rieske, mitochondrial.